Here is a 1092-residue protein sequence, read N- to C-terminus: Probable cellulose synthase A catalytic subunit 5 [UDP-forming] (1092 aa).

Residues 1–279 lie on the Cytoplasmic side of the membrane; the sequence is MEASAGLVAG…SSSLVNPYRM (279 aa). C39, C42, C58, C61, C66, C69, C81, and C84 together coordinate Zn(2+). The segment at 39–85 adopts an RING-type; degenerate zinc-finger fold; it reads CQICGDDVGLTPDGEPFVACNECAFPVCRDCYEYERREGTQNCPQCK. The helical transmembrane segment at 280–300 threads the bilayer; that stretch reads IIIIRLVVLGFFFHYRVMHPV. The Extracellular segment spans residues 301–302; it reads PD. Residues 303-323 traverse the membrane as a helical segment; that stretch reads AFALWLISVICEIWFAMSWIL. The Cytoplasmic segment spans residues 324–868; it reads DQFPKWFPIE…CLERFSYINS (545 aa). Residues S362, K368, E369, and D398 each contribute to the UDP-alpha-D-glucose site. D398 is a catalytic residue. A coiled-coil region spans residues 450–479; sequence NFVRERRAMKREYEEFKVRINALVAKAQKV. K539 is a UDP-alpha-D-glucose binding site. Mn(2+) contacts are provided by K540 and D564. The active site involves D792. A helical membrane pass occupies residues 869–889; the sequence is IVYPWTSIPLLAYCTLPAICL. Topologically, residues 890–901 are extracellular; sequence LTGKFITPELTN. A helical transmembrane segment spans residues 902–922; it reads IASLWFMSLFICIFATGILEM. Topologically, residues 923-938 are cytoplasmic; sequence RWSGVGIDDWWRNEQF. A helical membrane pass occupies residues 939–959; sequence WVIGGVSSHLFAVFQGLLKVI. Residues 960-987 lie on the Extracellular side of the membrane; that stretch reads AGIDTSFTVTSKGGDDEEFSELYTFKWT. A helical membrane pass occupies residues 988 to 1008; the sequence is TLLIPPTTLLLLNFIGVVAGV. The Cytoplasmic portion of the chain corresponds to 1009 to 1019; that stretch reads SNAINNGYESW. Residues 1020–1040 form a helical membrane-spanning segment; it reads GPLFGKLFFAFWVIVHLYPFL. Topologically, residues 1041-1049 are extracellular; sequence KGLVGRQNR. The chain crosses the membrane as a helical span at residues 1050 to 1070; the sequence is TPTIVIVWSILLASIFSLLWV. Residues 1071–1092 are Cytoplasmic-facing; that stretch reads RIDPFLAKNDGPLLEECGLDCN.

It belongs to the glycosyltransferase 2 family. Plant cellulose synthase subfamily. Mn(2+) serves as cofactor. Requires Zn(2+) as cofactor.

The protein localises to the cell membrane. It carries out the reaction [(1-&gt;4)-beta-D-glucosyl](n) + UDP-alpha-D-glucose = [(1-&gt;4)-beta-D-glucosyl](n+1) + UDP + H(+). It participates in glycan metabolism; plant cellulose biosynthesis. Probable catalytic subunit of cellulose synthase terminal complexes ('rosettes'), required for beta-1,4-glucan microfibril crystallization, a major mechanism of the cell wall formation. In Oryza sativa subsp. indica (Rice), this protein is Probable cellulose synthase A catalytic subunit 5 [UDP-forming] (CESA5).